The following is a 222-amino-acid chain: Sugar fermentation stimulation protein homolog (222 aa).

This sequence belongs to the SfsA family.

The chain is Sugar fermentation stimulation protein homolog from Thermotoga neapolitana (strain ATCC 49049 / DSM 4359 / NBRC 107923 / NS-E).